We begin with the raw amino-acid sequence, 215 residues long: Protein LURP-one-related 4 (215 aa).

Belongs to the LOR family.

In terms of biological role, might be related to the phospholipid scramblase and tubby-like superfamily of membrane tethered transcription factors. This chain is Protein LURP-one-related 4, found in Arabidopsis thaliana (Mouse-ear cress).